We begin with the raw amino-acid sequence, 341 residues long: N-(sulfonatooxy)alkenimidothioic acid sulfate-lyase (epithionitrile-forming) (341 aa).

Residues 1–24 form a disordered region; that stretch reads MAPTLQGQWIKVGQKGGTGPGPRS. Kelch repeat units follow at residues 34–82, 87–133, 139–194, and 203–249; these read KLYS…VRMV, KIYI…FHSM, HVYV…VVQG, and ATSI…AHAV. Residues lysine 46, arginine 94, threonine 129, phenylalanine 130, arginine 157, glycine 186, lysine 211, and valine 244 each coordinate a (Z)-N-(sulfonatooxy)alkanimidothioate. Arginine 94 (proton donor) is an active-site residue. The Proton donor role is filled by arginine 157. 3 residues coordinate Fe(2+): glutamate 260, aspartate 264, and histidine 268. Tryptophan 303 serves as a coordination point for a (Z)-N-(sulfonatooxy)alkanimidothioate.

In terms of assembly, homodimer. Interacts with WRKY53. Fe(2+) is required as a cofactor. As to expression, expressed in epidermal cells of all above-ground organs except the anthers, in cambial cells of leaf and stem vascular bundles, and in glucosinolates rich S-cells found in stems just below the inflorescence. Absent from roots.

The protein localises to the cytoplasm. It is found in the nucleus. It catalyses the reaction a (Z)-N-(sulfonatooxy)alkenimidothioate = an epithionitrile + sulfate. The catalysed reaction is a (Z)-N-(sulfonatooxy)alkanimidothioate = a nitrile + sulfur + sulfate. It carries out the reaction (Z)-(indol-3-yl)-N-(sulfonatooxy)methanimidothioate = (indol-3-yl)acetonitrile + sulfur + sulfate. With respect to regulation, not dependent on the presence of Fe(2+) although supplemental Fe(2+) increases nitriles formation. Functionally, specifier protein that contributes to constitutive and herbivore-induced simple nitrile formation. Converts glucosinolates both to epithionitriles and to simple nitriles in the presence of myrosinase. Promotes the formation of epithionitriles after hydrolysis of alkenylglucosinolates containing a terminal double bond. Mediates indol-3-ylacetonitrile (IACN) production from indol-3-ylmethylglucosinolate (glucobrassicin). Triggers the production of 3,4-epithiobutylnitrile from 2-propenylisothiocyanate, product of 2-propenylglucosinolate (sinigrin) catalysis by myrosinase. Seems inactive toward benzylglucosinolate (glucotropaeolin). Acts as a negative regulator of senescence. In Arabidopsis thaliana (Mouse-ear cress), this protein is N-(sulfonatooxy)alkenimidothioic acid sulfate-lyase (epithionitrile-forming).